We begin with the raw amino-acid sequence, 95 residues long: Putative pterin-4-alpha-carbinolamine dehydratase (95 aa).

The protein belongs to the pterin-4-alpha-carbinolamine dehydratase family.

It carries out the reaction (4aS,6R)-4a-hydroxy-L-erythro-5,6,7,8-tetrahydrobiopterin = (6R)-L-erythro-6,7-dihydrobiopterin + H2O. This chain is Putative pterin-4-alpha-carbinolamine dehydratase, found in Nocardia farcinica (strain IFM 10152).